A 482-amino-acid polypeptide reads, in one-letter code: ATP synthase subunit beta (482 aa).

Residue 162 to 169 (GGAGVGKT) coordinates ATP.

It belongs to the ATPase alpha/beta chains family. In terms of assembly, F-type ATPases have 2 components, CF(1) - the catalytic core - and CF(0) - the membrane proton channel. CF(1) has five subunits: alpha(3), beta(3), gamma(1), delta(1), epsilon(1). CF(0) has four main subunits: a(1), b(1), b'(1) and c(9-12).

The protein resides in the cellular thylakoid membrane. It catalyses the reaction ATP + H2O + 4 H(+)(in) = ADP + phosphate + 5 H(+)(out). Its function is as follows. Produces ATP from ADP in the presence of a proton gradient across the membrane. The catalytic sites are hosted primarily by the beta subunits. The protein is ATP synthase subunit beta of Nostoc punctiforme (strain ATCC 29133 / PCC 73102).